Here is a 43-residue protein sequence, read N- to C-terminus: uncharacterized protein (43 aa).

Composition is skewed to polar residues over residues 1 to 19 (MSQK…SGAS) and 33 to 43 (PENSISKTFSK). Positions 1 to 43 (MSQKLSFFQQNTRNGSGASRTLVIKPPTIQPKPENSISKTFSK) are disordered.

This is an uncharacterized protein from Dictyostelium discoideum (Social amoeba).